The following is a 456-amino-acid chain: Keratin, type I cytoskeletal 12 (456 aa).

Residues 1–19 are compositionally biased toward polar residues; it reads MSLSVRTSALSRRSSSQNG. Positions 1–25 are disordered; it reads MSLSVRTSALSRRSSSQNGVAGRPW. The interval 1-114 is head; it reads MSLSVRTSAL…GNDGGLLSGS (114 aa). Positions 115–150 are coil 1A; that stretch reads EKETMQNLNDRLASYLGKVRALEEANAELENKIREW. The IF rod domain occupies 115-402; the sequence is EKETMQNLND…RLLEGDTQGD (288 aa). A linker 1 region spans residues 154 to 171; that stretch reads RRTGDSGSQSDYSKYYPL. The tract at residues 172–263 is coil 1B; sequence IEDLKNKIIS…KNHEEELQSF (92 aa). Residues 264–286 are linker 12; that stretch reads QAGGPGEVNVEMDAAPGVDLTKS. The tract at residues 287-397 is coil 2; that stretch reads GELRKEINSN…IETYRRLLEG (111 aa). Residues 398–456 form a tail region; the sequence is DTQGDGFDESLSLTVSKPQAPSVDSSKDPNKTRKIKTVVQEIVNGEVVSSQVQELEEAM. The interval 405-430 is disordered; it reads DESLSLTVSKPQAPSVDSSKDPNKTR. Positions 408–421 are enriched in polar residues; it reads LSLTVSKPQAPSVD.

Belongs to the intermediate filament family. As to quaternary structure, heterotetramer of two type I and two type II keratins. Keratin-3 associates with keratin-12.

In terms of biological role, involved in corneal epithelium organization, integrity and corneal keratin expression. The protein is Keratin, type I cytoskeletal 12 of Rattus norvegicus (Rat).